The chain runs to 700 residues: MFPPMWRRLIYHPDINYALRQTLVLCLPVAVGLMLGELRFGLLFSLVPACCNIAGLDTPHKRFFKRLIIGASLFATCSLLTQLLLAKDVPLPFLLTGLTLVLGVTAELGPLHAKLLPASLLAAIFTLSLAGYMPVWEPLLIYALGTLWYGLFNWFWFWIWREQPLRESLSLLYRELADYCEAKYSLLTQHTDPEKALPPLLVRQQKAVDLITQCYQQMHMLSAQNNTDYKRMLRIFQEALDLQEHISVSLHQPEEVQKLVERSHAEEVIRWNAQTVAARLRVLADDILYHRLPTRFTMEKQIGALEKIARQHPDNPVGQFCYWHFSRIARVLRTQKPLYARDLLADKQRRMPLLPALKSYLSLKSPALRNAGRLSVMLSVASLMGTALHLPKSYWILMTVLLVTQNGYGATRLRIVNRSVGTVVGLIIAGVALHFKIPEGYTLTLMLITTLASYLILRKNYGWATVGFTITAVYTLQLLWLNGEQYILPRLIDTIIGCLIAFGGTVWLWPQWQSGLLRKNAHDALEAYQEAIRLILSEDPQPTPLAWQRMRVNQAHNTLYNSLNQAMQEPAFNSHYLADMKLWVTHSQFIVEHINAMTTLAREHRALPPELAQEYLQSCEIAIQRCQQRLEYDEPGSSGDANIMDAPEMQPHEGAAGTLEQHLQRVIGHLNTMHTISSMAWRQRPHHGIWLSRKLRDSKA.

9 helical membrane-spanning segments follow: residues 24–44, 67–87, 89–109, 115–135, 139–159, 383–403, 420–440, 461–481, and 491–511; these read VLCL…GLLF, LIIG…LLAK, VPLP…AELG, LLPA…YMPV, LLIY…WFWI, LMGT…VLLV, VGTV…IPEG, YGWA…LLWL, and LIDT…LWPQ.

Belongs to the YccS/YhfK family.

It localises to the cell membrane. This is an uncharacterized protein from Escherichia coli (strain K12).